A 563-amino-acid polypeptide reads, in one-letter code: MASTIQALPQEVVYLITAGEVIDSFAAVVRELVENSLDAGANRIVVYLWPQQWRVRVADNGCGMNLDDLQQAASAHSTSKIRSSADLWKIHSLGFRGEALHSLTTLADVEIISRAPENVGWRVVYGDNGEATQVEATAIAPGTVVTVSNLFASCAARRQGLPTTAQQMKAVQATIQQIALCHPQTTWQVWQNDRIWFTISPAATAGQLIPQFLPQLRPGDLQEIKLEIPNPENPQLSTNNKANATTLSLVVGLPDRCHRHRPDWVRVAINGRMIKSPELEQTILAAFHRTLPRDRYPLCFLHLLISPDQINWNRNPAKTEIYLHDLSYWQEQVTQAINQTLRISAANIKESVQTTRVSQLLKAAEEKGNYNFNPQNANPADNTQHYLKAVAQVSNTYIVAEHSGGMWLVEQHIAHERVLYEQLCDNWRLIPVEPPIILYQLSPAQVAQLQRIGLDIDIFGEQLWAVRNLPAMLQQREDCAEAILELSWGGDLQTAQVAVACRSAIRNGTPMSLPEMQKLLDDWQRTRNPRTCPHGRPIYLSLDESSLSRFFRRHWVIGKSHGI.

Belongs to the DNA mismatch repair MutL/HexB family.

In terms of biological role, this protein is involved in the repair of mismatches in DNA. It is required for dam-dependent methyl-directed DNA mismatch repair. May act as a 'molecular matchmaker', a protein that promotes the formation of a stable complex between two or more DNA-binding proteins in an ATP-dependent manner without itself being part of a final effector complex. In Trichormus variabilis (strain ATCC 29413 / PCC 7937) (Anabaena variabilis), this protein is DNA mismatch repair protein MutL.